The chain runs to 555 residues: MVKRGKKTKYLFVTGGVVSSLGKGLAAASIGALLENRGLEVTHLKLDPYINVDPGTMSPFQHGEVYVTDDGAETDLDLGHYERFTSAKMTRKNNYTTGRIYSNVIQRERRGEYLGKTVQVIPHITDEIKAVIREAAGGVDILIVEVGGTVGDIESLPFLEAIRQMKYDVGEENAVYAHLTLVPFIAAAGELKTKPTQHSVKELREIGIQPDLLLCRSDREIAREMKDKIALFCNVDPSAVFTALDVKSIYEVPLSLHKEGLDDKLAELFNIWSRAPRLDKWEQIVQKVKAPKHGEVRVGVVGKYVELHESYKSLNEALVHGGIGADVRVKQVFIDSTKLEEGDLSELNQVDAILVPGGFGVRGTEGKILAVRHAREHKIPFFGICLGLQMAVIEFGRSVLGLERANSLEFDEQTPHPVVTLMEAQKAVADKGGTMRLGTYPCALKDGTKARELYGVDLVQERHRHRYEFNNAYRAQYEGAGMVFSGTNPELNLVEMIELNNHPHFVGCQFHPEFKSKPFAPHPLFAGFVHAAREQRDQQADRRAAVTKLPVGKNV.

An amidoligase domain region spans residues methionine 1 to isoleucine 271. Residue serine 19 coordinates CTP. Serine 19 lines the UTP pocket. ATP contacts are provided by residues serine 20–leucine 25 and aspartate 77. Residues aspartate 77 and glutamate 145 each coordinate Mg(2+). CTP-binding positions include aspartate 152–glutamate 154, lysine 192–glutamine 197, and lysine 228. UTP-binding positions include lysine 192–glutamine 197 and lysine 228. The 242-residue stretch at arginine 297–glutamine 538 folds into the Glutamine amidotransferase type-1 domain. Residue glycine 358 coordinates L-glutamine. The active-site Nucleophile; for glutamine hydrolysis is the cysteine 385. L-glutamine is bound by residues leucine 386 to glutamine 389, glutamate 409, and arginine 466. Residues histidine 511 and glutamate 513 contribute to the active site.

The protein belongs to the CTP synthase family. As to quaternary structure, homotetramer.

It carries out the reaction UTP + L-glutamine + ATP + H2O = CTP + L-glutamate + ADP + phosphate + 2 H(+). The catalysed reaction is L-glutamine + H2O = L-glutamate + NH4(+). It catalyses the reaction UTP + NH4(+) + ATP = CTP + ADP + phosphate + 2 H(+). It participates in pyrimidine metabolism; CTP biosynthesis via de novo pathway; CTP from UDP: step 2/2. With respect to regulation, allosterically activated by GTP, when glutamine is the substrate; GTP has no effect on the reaction when ammonia is the substrate. The allosteric effector GTP functions by stabilizing the protein conformation that binds the tetrahedral intermediate(s) formed during glutamine hydrolysis. Inhibited by the product CTP, via allosteric rather than competitive inhibition. Functionally, catalyzes the ATP-dependent amination of UTP to CTP with either L-glutamine or ammonia as the source of nitrogen. Regulates intracellular CTP levels through interactions with the four ribonucleotide triphosphates. This chain is CTP synthase, found in Anaeromyxobacter sp. (strain Fw109-5).